A 444-amino-acid chain; its full sequence is MSASTMTPGEIVSELDKYIIGQNRAKRAVAVALRNRWRRQQVADPLRHEIHPKNILMIGPTGVGKTEIARRLAKLANAPFIKIEATKFTEVGYVGRDVDTIIRDLTEFSIKQTRELEMRRVRSHAEDAAEDRILDVLVPPARNAMGEPQRDDGNTTRQTFRKRLREGSLDDLEIEIDIAQATPQLDVMTPPGMEEMAEQLRGMFAGLARDKTKPKKIKVKEAFKLIIEEEAAKRVNEDDLRAAAIANVEQNGIVFLDEIDKIAARQESGGADVSRQGVQRDLLPLVEGTTVNTRYGMVRTDHILFIASGAFHLSRPSDLIPELQGRFPIRVELDSLSADDFVRILSETDASLVKQYTALLATEDVQLAFTEDGIKRLAELAFSVNERTENIGARRLYTVMEKLLEELSFDAGASSGQSVTIDAAYVDAQLSEAASSQDLARYVL.

Residues Ile-20, 62–67 (GVGKTE), Asp-257, Glu-322, and Arg-394 each bind ATP.

This sequence belongs to the ClpX chaperone family. HslU subfamily. A double ring-shaped homohexamer of HslV is capped on each side by a ring-shaped HslU homohexamer. The assembly of the HslU/HslV complex is dependent on binding of ATP.

Its subcellular location is the cytoplasm. ATPase subunit of a proteasome-like degradation complex; this subunit has chaperone activity. The binding of ATP and its subsequent hydrolysis by HslU are essential for unfolding of protein substrates subsequently hydrolyzed by HslV. HslU recognizes the N-terminal part of its protein substrates and unfolds these before they are guided to HslV for hydrolysis. The chain is ATP-dependent protease ATPase subunit HslU from Bordetella avium (strain 197N).